A 543-amino-acid polypeptide reads, in one-letter code: Pectate disaccharide-lyase (543 aa).

The protein belongs to the polysaccharide lyase 2 family. It depends on Cu cation as a cofactor. Mn(2+) is required as a cofactor. Ni(2+) serves as cofactor.

It is found in the cytoplasm. The catalysed reaction is [(1-&gt;4)-alpha-D-galacturonosyl](n) = 4-(4-deoxy-alpha-D-galact-4-enuronosyl)-D-galacturonate + [(1-&gt;4)-alpha-D-galacturonosyl](n-2). It participates in glycan metabolism; pectin degradation. Catalyzes the formation of unsaturated digalacturonates from polygalacturonate or short oligogalacturonates. The polypeptide is Pectate disaccharide-lyase (pelW) (Dickeya dadantii (strain 3937) (Erwinia chrysanthemi (strain 3937))).